A 185-amino-acid chain; its full sequence is Ribosome-recycling factor (185 aa).

Belongs to the RRF family.

It is found in the cytoplasm. In terms of biological role, responsible for the release of ribosomes from messenger RNA at the termination of protein biosynthesis. May increase the efficiency of translation by recycling ribosomes from one round of translation to another. In Clostridium acetobutylicum (strain ATCC 824 / DSM 792 / JCM 1419 / IAM 19013 / LMG 5710 / NBRC 13948 / NRRL B-527 / VKM B-1787 / 2291 / W), this protein is Ribosome-recycling factor.